The following is a 437-amino-acid chain: Succinate--CoA ligase [ADP-forming] subunit beta, hydrogenosomal (437 aa).

The transit peptide at 1-27 directs the protein to the hydrogenosome; it reads MLANVTRSTSKAAPALASIAQTAQKRF. The 243-residue stretch at 36–278 folds into the ATP-grasp domain; sequence MNLLHEYNVN…TTQEDPREVA (243 aa). ATP contacts are provided by residues K73, 80-82, and E141; that span reads GRG. 2 residues coordinate Mg(2+): N233 and D247. Substrate is bound by residues N299 and 356-358; that span reads GIM.

It belongs to the succinate/malate CoA ligase beta subunit family. Heterodimer of an alpha and a beta subunit. The cofactor is Mg(2+).

It is found in the hydrogenosome. The enzyme catalyses succinate + ATP + CoA = succinyl-CoA + ADP + phosphate. Its pathway is carbohydrate metabolism; tricarboxylic acid cycle; succinate from succinyl-CoA (ligase route): step 1/1. Its function is as follows. Succinyl-CoA synthetase functions in the citric acid cycle (TCA), coupling the hydrolysis of succinyl-CoA to the synthesis of ATP and thus represents the only step of substrate-level phosphorylation in the TCA. The beta subunit provides nucleotide specificity of the enzyme and binds the substrate succinate, while the binding sites for coenzyme A and phosphate are found in the alpha subunit. The protein is Succinate--CoA ligase [ADP-forming] subunit beta, hydrogenosomal of Neocallimastix frontalis (Rumen fungus).